Here is a 379-residue protein sequence, read N- to C-terminus: Flap endonuclease 1 (379 aa).

The tract at residues 1 to 105 (MGIKGLTKLL…QELAKRYSKR (105 aa)) is N-domain. Residue aspartate 34 participates in Mg(2+) binding. Residue arginine 71 participates in DNA binding. 5 residues coordinate Mg(2+): aspartate 87, glutamate 159, glutamate 161, aspartate 180, and aspartate 182. Residues 123 to 254 (AIEKLSKRTV…QTALKLIRQH (132 aa)) are I-domain. A DNA-binding site is contributed by glutamate 159. DNA is bound by residues glycine 232 and aspartate 234. Residue aspartate 234 coordinates Mg(2+). Residues 331–379 (AKNKSSQGRLESFFKPTATTSAPLKRKETSDKTSKAAANKKTKAGGKKK) are disordered. The interaction with PCNA stretch occupies residues 336-344 (SQGRLESFF). Residues 355–364 (KRKETSDKTS) are compositionally biased toward basic and acidic residues. The segment covering 368–379 (ANKKTKAGGKKK) has biased composition (basic residues).

Belongs to the XPG/RAD2 endonuclease family. FEN1 subfamily. Interacts with PCNA. Three molecules of FEN1 bind to one PCNA trimer with each molecule binding to one PCNA monomer. PCNA stimulates the nuclease activity without altering cleavage specificity. It depends on Mg(2+) as a cofactor. Post-translationally, phosphorylated. Phosphorylation upon DNA damage induces relocalization to the nuclear plasma.

The protein resides in the nucleus. Its subcellular location is the nucleolus. It is found in the nucleoplasm. The protein localises to the mitochondrion. Structure-specific nuclease with 5'-flap endonuclease and 5'-3' exonuclease activities involved in DNA replication and repair. During DNA replication, cleaves the 5'-overhanging flap structure that is generated by displacement synthesis when DNA polymerase encounters the 5'-end of a downstream Okazaki fragment. It enters the flap from the 5'-end and then tracks to cleave the flap base, leaving a nick for ligation. Also involved in the long patch base excision repair (LP-BER) pathway, by cleaving within the apurinic/apyrimidinic (AP) site-terminated flap. Acts as a genome stabilization factor that prevents flaps from equilibrating into structures that lead to duplications and deletions. Also possesses 5'-3' exonuclease activity on nicked or gapped double-stranded DNA, and exhibits RNase H activity. Also involved in replication and repair of rDNA and in repairing mitochondrial DNA. In Zea mays (Maize), this protein is Flap endonuclease 1.